Reading from the N-terminus, the 904-residue chain is Phosphoenolpyruvate carboxylase (904 aa).

A disordered region spans residues 52 to 71 (ISRRESDAPPSTLSEQLTGR). Residues 60–70 (PPSTLSEQLTG) show a composition bias toward polar residues. Catalysis depends on residues H151 and K570.

It belongs to the PEPCase type 1 family. It depends on Mg(2+) as a cofactor.

The enzyme catalyses oxaloacetate + phosphate = phosphoenolpyruvate + hydrogencarbonate. In terms of biological role, forms oxaloacetate, a four-carbon dicarboxylic acid source for the tricarboxylic acid cycle. This Xanthomonas euvesicatoria pv. vesicatoria (strain 85-10) (Xanthomonas campestris pv. vesicatoria) protein is Phosphoenolpyruvate carboxylase.